The following is a 97-amino-acid chain: Aspartyl/glutamyl-tRNA(Asn/Gln) amidotransferase subunit C (97 aa).

This sequence belongs to the GatC family. In terms of assembly, heterotrimer of A, B and C subunits.

It catalyses the reaction L-glutamyl-tRNA(Gln) + L-glutamine + ATP + H2O = L-glutaminyl-tRNA(Gln) + L-glutamate + ADP + phosphate + H(+). The catalysed reaction is L-aspartyl-tRNA(Asn) + L-glutamine + ATP + H2O = L-asparaginyl-tRNA(Asn) + L-glutamate + ADP + phosphate + 2 H(+). In terms of biological role, allows the formation of correctly charged Asn-tRNA(Asn) or Gln-tRNA(Gln) through the transamidation of misacylated Asp-tRNA(Asn) or Glu-tRNA(Gln) in organisms which lack either or both of asparaginyl-tRNA or glutaminyl-tRNA synthetases. The reaction takes place in the presence of glutamine and ATP through an activated phospho-Asp-tRNA(Asn) or phospho-Glu-tRNA(Gln). The protein is Aspartyl/glutamyl-tRNA(Asn/Gln) amidotransferase subunit C of Picosynechococcus sp. (strain ATCC 27264 / PCC 7002 / PR-6) (Agmenellum quadruplicatum).